The sequence spans 321 residues: Acetyl-coenzyme A carboxylase carboxyl transferase subunit alpha (321 aa).

In terms of domain architecture, CoA carboxyltransferase C-terminal spans 39–293; sequence RLQQKSQNLA…RRALGDALRQ (255 aa).

Belongs to the AccA family. As to quaternary structure, acetyl-CoA carboxylase is a heterohexamer composed of biotin carboxyl carrier protein (AccB), biotin carboxylase (AccC) and two subunits each of ACCase subunit alpha (AccA) and ACCase subunit beta (AccD).

Its subcellular location is the cytoplasm. The catalysed reaction is N(6)-carboxybiotinyl-L-lysyl-[protein] + acetyl-CoA = N(6)-biotinyl-L-lysyl-[protein] + malonyl-CoA. Its pathway is lipid metabolism; malonyl-CoA biosynthesis; malonyl-CoA from acetyl-CoA: step 1/1. In terms of biological role, component of the acetyl coenzyme A carboxylase (ACC) complex. First, biotin carboxylase catalyzes the carboxylation of biotin on its carrier protein (BCCP) and then the CO(2) group is transferred by the carboxyltransferase to acetyl-CoA to form malonyl-CoA. In Bordetella bronchiseptica (strain ATCC BAA-588 / NCTC 13252 / RB50) (Alcaligenes bronchisepticus), this protein is Acetyl-coenzyme A carboxylase carboxyl transferase subunit alpha.